Here is a 337-residue protein sequence, read N- to C-terminus: Cobalt-precorrin-5B C(1)-methyltransferase (337 aa).

The protein belongs to the CbiD family.

The catalysed reaction is Co-precorrin-5B + S-adenosyl-L-methionine = Co-precorrin-6A + S-adenosyl-L-homocysteine. It participates in cofactor biosynthesis; adenosylcobalamin biosynthesis; cob(II)yrinate a,c-diamide from sirohydrochlorin (anaerobic route): step 6/10. Functionally, catalyzes the methylation of C-1 in cobalt-precorrin-5B to form cobalt-precorrin-6A. The protein is Cobalt-precorrin-5B C(1)-methyltransferase of Methanoculleus marisnigri (strain ATCC 35101 / DSM 1498 / JR1).